A 148-amino-acid polypeptide reads, in one-letter code: ATP synthase epsilon chain (148 aa).

It belongs to the ATPase epsilon chain family. As to quaternary structure, F-type ATPases have 2 components, CF(1) - the catalytic core - and CF(0) - the membrane proton channel. CF(1) has five subunits: alpha(3), beta(3), gamma(1), delta(1), epsilon(1). CF(0) has three main subunits: a, b and c.

The protein resides in the cell inner membrane. Produces ATP from ADP in the presence of a proton gradient across the membrane. The protein is ATP synthase epsilon chain of Paracoccus denitrificans (strain Pd 1222).